The primary structure comprises 317 residues: Ribosomal protein L11 methyltransferase (317 aa).

4 residues coordinate S-adenosyl-L-methionine: Thr158, Gly179, Asp201, and Asn244.

It belongs to the methyltransferase superfamily. PrmA family.

The protein resides in the cytoplasm. It catalyses the reaction L-lysyl-[protein] + 3 S-adenosyl-L-methionine = N(6),N(6),N(6)-trimethyl-L-lysyl-[protein] + 3 S-adenosyl-L-homocysteine + 3 H(+). Its function is as follows. Methylates ribosomal protein L11. The protein is Ribosomal protein L11 methyltransferase of Streptococcus equi subsp. equi (strain 4047).